The following is a 396-amino-acid chain: Subtilisin-like protease 5 (396 aa).

The signal sequence occupies residues 1–20 (MTGFFTFLSFSLAALSVTNA). Positions 21–116 (AHILSVPKGA…VEPDAIISQH (96 aa)) are excised as a propeptide. An Inhibitor I9 domain is found at 37–113 (YIVVMKDDTS…VAFVEPDAII (77 aa)). N-linked (GlcNAc...) asparagine glycosylation occurs at asparagine 63. Residues 125–396 (PWGLSRLSNR…SRLLYNGSGR (272 aa)) form the Peptidase S8 domain. Residues aspartate 156 and histidine 187 each act as charge relay system in the active site. Asparagine 230 and asparagine 248 each carry an N-linked (GlcNAc...) asparagine glycan. Serine 342 acts as the Charge relay system in catalysis. Residues 376–389 (PTIRNPGPDTTSRL) are compositionally biased toward polar residues. A disordered region spans residues 376–396 (PTIRNPGPDTTSRLLYNGSGR). N-linked (GlcNAc...) asparagine glycosylation is present at asparagine 392.

The protein belongs to the peptidase S8 family.

It is found in the secreted. Functionally, secreted subtilisin-like serine protease with keratinolytic activity that contributes to pathogenicity. This chain is Subtilisin-like protease 5 (SUB5), found in Trichophyton tonsurans (Scalp ringworm fungus).